The chain runs to 512 residues: Glutathione-binding protein GsiB (512 aa).

An N-terminal signal peptide occupies residues 1–26 (MARAVHRSGLVALGIATALMASCAFA).

The protein belongs to the bacterial solute-binding protein 5 family. The complex is composed of two ATP-binding proteins (GsiA), two transmembrane proteins (GsiC and GsiD) and a solute-binding protein (GsiB).

Its subcellular location is the periplasm. Part of the ABC transporter complex GsiABCD involved in glutathione import. Binds glutathione. The sequence is that of Glutathione-binding protein GsiB from Escherichia coli O6:K15:H31 (strain 536 / UPEC).